The sequence spans 401 residues: MTLPKIKHVRAWFIGGATAEKGAGGGDYHDQGGNHWIDDHIATPMSKYRDYEQSRQSFGINVLGTLIVEVEAENGQTGFAVSTAGEMGCFIVEKHLNRFIEGKCVSDIKLIHDQMLGATMYYSGSGGLVMNTISCVDLALWDLFGKVVGLPVYKLLGGAVRDEIQFYATGARPDLAKEMGFIGGKMPTHWGPHDGDAGIRKDAAMVADMREKCGPDFWLMLDCWMSQDVNYATKLAHACAPFNLKWIEECLPPQQYEGYRELKRNAPAGMMVTSGEHHGTLQSFRTLAETGIDIMQPDVGWCGGLTTLVEIAALAKSRGQLVVPHGSSVYSHHAVITFTNTPFSEFLMTSPDCSTLRPQFDPILLDEPVPVNGRIHKSVLDKPGFGVELNRDCHLKRPYSH.

Positions 29 and 55 each coordinate substrate. The Mg(2+) site is built by Asp222, Glu248, and Glu276. His325 functions as the Proton acceptor in the catalytic mechanism. Glu345 is a binding site for substrate.

This sequence belongs to the mandelate racemase/muconate lactonizing enzyme family. RhamD subfamily. Homooctamer; tetramer of dimers. Mg(2+) serves as cofactor.

The catalysed reaction is L-rhamnonate = 2-dehydro-3-deoxy-L-rhamnonate + H2O. In terms of biological role, catalyzes the dehydration of L-rhamnonate to 2-keto-3-deoxy-L-rhamnonate (KDR). The polypeptide is L-rhamnonate dehydratase (Salmonella schwarzengrund (strain CVM19633)).